We begin with the raw amino-acid sequence, 510 residues long: Cytochrome P450 703A2 (510 aa).

The chain crosses the membrane as a helical span at residues 2–22; it reads ILVLASLFAVLILNVLLWRWL. A heme-binding site is contributed by C451.

The protein belongs to the cytochrome P450 family. The cofactor is heme.

It is found in the membrane. It carries out the reaction dodecanoate + reduced [NADPH--hemoprotein reductase] + O2 = 7-hydroxydodecanoate + oxidized [NADPH--hemoprotein reductase] + H2O + H(+). Functionally, involved in pollen wall development. Catalyzes the conversion of medium-chain saturated fatty acids to the corresponding monohydroxylated fatty acids, with a preferential hydroxylation of lauric acid at the C-7 position. In-chain hydroxylated fatty acids, together with omega-hydroxylated fatty acids, are key monomeric aliphatic building blocks for sporopollenin synthesis during exine formation. The chain is Cytochrome P450 703A2 from Arabidopsis thaliana (Mouse-ear cress).